The sequence spans 87 residues: Hemocyanin alpha chain (87 aa).

This sequence belongs to the tyrosinase family. Hemocyanin subfamily. Polymer that contains six different types of chains (alpha, beta, gamma, delta, epsilon, and zeta). Hemolymph.

Its subcellular location is the secreted. It is found in the extracellular space. Its function is as follows. Hemocyanins are copper-containing oxygen carriers occurring freely dissolved in the hemolymph of many mollusks and arthropods. This is Hemocyanin alpha chain from Tachypleus tridentatus (Japanese horseshoe crab).